A 101-amino-acid polypeptide reads, in one-letter code: NAD(P)H-quinone oxidoreductase subunit 4L, chloroplastic (101 aa).

Transmembrane regions (helical) follow at residues 2–22 (MLEY…YGLI), 32–52 (MCLE…SDFF), and 61–81 (ILSI…PAIV).

The protein belongs to the complex I subunit 4L family. NDH is composed of at least 16 different subunits, 5 of which are encoded in the nucleus.

Its subcellular location is the plastid. The protein localises to the chloroplast thylakoid membrane. The enzyme catalyses a plastoquinone + NADH + (n+1) H(+)(in) = a plastoquinol + NAD(+) + n H(+)(out). It carries out the reaction a plastoquinone + NADPH + (n+1) H(+)(in) = a plastoquinol + NADP(+) + n H(+)(out). Functionally, NDH shuttles electrons from NAD(P)H:plastoquinone, via FMN and iron-sulfur (Fe-S) centers, to quinones in the photosynthetic chain and possibly in a chloroplast respiratory chain. The immediate electron acceptor for the enzyme in this species is believed to be plastoquinone. Couples the redox reaction to proton translocation, and thus conserves the redox energy in a proton gradient. The sequence is that of NAD(P)H-quinone oxidoreductase subunit 4L, chloroplastic from Populus alba (White poplar).